A 433-amino-acid chain; its full sequence is Enolase (433 aa).

Position 164 (Q164) interacts with (2R)-2-phosphoglycerate. The Proton donor role is filled by E206. Mg(2+) is bound by residues D243, E289, and D316. Residues K341, R370, S371, and K392 each coordinate (2R)-2-phosphoglycerate. K341 (proton acceptor) is an active-site residue.

Belongs to the enolase family. Mg(2+) is required as a cofactor.

The protein localises to the cytoplasm. It localises to the secreted. The protein resides in the cell surface. The catalysed reaction is (2R)-2-phosphoglycerate = phosphoenolpyruvate + H2O. It functions in the pathway carbohydrate degradation; glycolysis; pyruvate from D-glyceraldehyde 3-phosphate: step 4/5. Functionally, catalyzes the reversible conversion of 2-phosphoglycerate (2-PG) into phosphoenolpyruvate (PEP). It is essential for the degradation of carbohydrates via glycolysis. The chain is Enolase from Borreliella burgdorferi (strain ATCC 35210 / DSM 4680 / CIP 102532 / B31) (Borrelia burgdorferi).